A 108-amino-acid chain; its full sequence is uncharacterized protein (108 aa).

Residues 15-37 traverse the membrane as a helical segment; that stretch reads SYYFYIFWNFFLPMFIVYRGFGL.

The protein localises to the membrane. This is an uncharacterized protein from Archaeoglobus fulgidus (strain ATCC 49558 / DSM 4304 / JCM 9628 / NBRC 100126 / VC-16).